A 350-amino-acid polypeptide reads, in one-letter code: Protein-glutamate methylesterase/protein-glutamine glutaminase 1 (350 aa).

One can recognise a Response regulatory domain in the interval 1 to 116; the sequence is MVVDDSAVVR…KGFLHDSAKV (116 aa). Asp50 carries the post-translational modification 4-aspartylphosphate. A CheB-type methylesterase domain is found at 160 to 350; sequence LKTTEQLVAI…IPQAILDCSH (191 aa). Residues Ser172, His198, and Asp294 contribute to the active site.

It belongs to the CheB family. Post-translationally, phosphorylated by CheA. Phosphorylation of the N-terminal regulatory domain activates the methylesterase activity.

The protein resides in the cytoplasm. The enzyme catalyses [protein]-L-glutamate 5-O-methyl ester + H2O = L-glutamyl-[protein] + methanol + H(+). It carries out the reaction L-glutaminyl-[protein] + H2O = L-glutamyl-[protein] + NH4(+). In terms of biological role, involved in chemotaxis. Part of a chemotaxis signal transduction system that modulates chemotaxis in response to various stimuli. Catalyzes the demethylation of specific methylglutamate residues introduced into the chemoreceptors (methyl-accepting chemotaxis proteins or MCP) by CheR. Also mediates the irreversible deamidation of specific glutamine residues to glutamic acid. The protein is Protein-glutamate methylesterase/protein-glutamine glutaminase 1 of Photobacterium profundum (strain SS9).